The primary structure comprises 145 residues: Transcription antitermination protein NusB (145 aa).

Belongs to the NusB family.

Functionally, involved in transcription antitermination. Required for transcription of ribosomal RNA (rRNA) genes. Binds specifically to the boxA antiterminator sequence of the ribosomal RNA (rrn) operons. The protein is Transcription antitermination protein NusB of Ruminiclostridium cellulolyticum (strain ATCC 35319 / DSM 5812 / JCM 6584 / H10) (Clostridium cellulolyticum).